Here is a 369-residue protein sequence, read N- to C-terminus: Transcription factor GTE6 (369 aa).

One can recognise a Bromo domain in the interval 89–198; the sequence is KRMQDLMRQF…EKFEEKWAHF (110 aa). Residues 201 to 263 adopt a coiled-coil conformation; sequence KVQEEEKIRE…VERCRKITIE (63 aa). The NET domain maps to 250 to 331; that stretch reads MRKVVERCRK…DALDNAMKKK (82 aa). Residues 329–348 are compositionally biased toward basic and acidic residues; that stretch reads KKKKEEETKTRELSGAQKKE. Residues 329 to 369 form a disordered region; sequence KKKKEEETKTRELSGAQKKEVSKKRNATTKLAERKTKRSRI. The Bipartite nuclear localization signal motif lies at 351–368; that stretch reads KKRNATTKLAERKTKRSR.

As to expression, abundantly expressed in flowers. Weakly expressed in roots, leaves and siliques; and undetectable in 5-day-old seedlings. In the basal rosette leaves of 21-day-old plants, it is more abundant in leaves 6 and 7, which possess narrow elliptical laminae, than in leaves 1-4, which have round laminae, suggesting a possible correlation between its expression and the formation of elliptical leaf laminae in mature leaves.

It is found in the nucleus. Its function is as follows. Regulates differences in leaf patterning between juvenile and mature leaves by controlling differences in the development of primordia produced during juvenile and mature phases. Acts by activating transcription of the myb-domain protein AS1, a gene involved in leaf-axis specification. Associates with the promoter and the start of the transcribed region of AS1 and up-regulates expression of AS1 through acetylation of histones H3 and H4. This Arabidopsis thaliana (Mouse-ear cress) protein is Transcription factor GTE6 (GTE6).